Here is a 437-residue protein sequence, read N- to C-terminus: UBX domain-containing protein 6 (437 aa).

2 disordered regions span residues 1 to 45 and 89 to 109; these read MNSF…AQGG and ERRQ…QPDR. Basic residues predominate over residues 7–18; it reads FLNKKRVQNHFK. The region spanning 179 to 251 is the PUB domain; that stretch reads ETAIETICKY…VFTKPSDVHL (73 aa). The UBX domain maps to 332–409; the sequence is YRYKYTLIRV…SLAPAALLHV (78 aa).

As to quaternary structure, interacts with cdc-48.1 (via N-terminus) and cdc-48.2 (via N-terminus). As to expression, expressed in the pharynx and some head neurons.

Functionally, probably acts as an adapter for ATPase cdc-48.1 and/or cdc-48.2, conferring substrate specificity. Involved in the lysosomal clearance of cellular material in diet restricted conditions. The protein is UBX domain-containing protein 6 of Caenorhabditis elegans.